The sequence spans 186 residues: Ribosome-recycling factor (186 aa).

It belongs to the RRF family.

The protein resides in the cytoplasm. Its function is as follows. Responsible for the release of ribosomes from messenger RNA at the termination of protein biosynthesis. May increase the efficiency of translation by recycling ribosomes from one round of translation to another. This is Ribosome-recycling factor from Rhizobium leguminosarum bv. trifolii (strain WSM2304).